The sequence spans 279 residues: Probable endonuclease 4 (279 aa).

His-69, His-109, Glu-145, Asp-179, His-182, His-216, Asp-229, His-231, and Glu-261 together coordinate Zn(2+).

It belongs to the AP endonuclease 2 family. Zn(2+) is required as a cofactor.

It catalyses the reaction Endonucleolytic cleavage to 5'-phosphooligonucleotide end-products.. Endonuclease IV plays a role in DNA repair. It cleaves phosphodiester bonds at apurinic or apyrimidinic (AP) sites, generating a 3'-hydroxyl group and a 5'-terminal sugar phosphate. The polypeptide is Probable endonuclease 4 (Tolumonas auensis (strain DSM 9187 / NBRC 110442 / TA 4)).